The following is a 760-amino-acid chain: Cellulose synthase-like protein G1 (760 aa).

Helical transmembrane passes span 28-48 and 54-74; these read IYAI…VHSL and TLIT…WATT. Active-site residues include Asp142 and Asp447. A run of 5 helical transmembrane segments spans residues 530-550, 558-578, 593-613, 656-676, and 680-700; these read IPLT…VSVF, FWLY…DFLL, LMIK…LKTL, VAIV…FCGG, and LELM…GAMV.

The protein belongs to the glycosyltransferase 2 family. Plant cellulose synthase-like G subfamily. In terms of tissue distribution, expressed in young seedlings, primarily in the vascular tissue.

The protein localises to the golgi apparatus membrane. In terms of biological role, thought to be a Golgi-localized beta-glycan synthase that polymerize the backbones of noncellulosic polysaccharides (hemicelluloses) of plant cell wall. This Arabidopsis thaliana (Mouse-ear cress) protein is Cellulose synthase-like protein G1 (CSLG1).